We begin with the raw amino-acid sequence, 293 residues long: Bifunctional protein FolD (293 aa).

NADP(+) is bound by residues 164–166, serine 193, and threonine 234; that span reads GRS.

Belongs to the tetrahydrofolate dehydrogenase/cyclohydrolase family. As to quaternary structure, homodimer.

The enzyme catalyses (6R)-5,10-methylene-5,6,7,8-tetrahydrofolate + NADP(+) = (6R)-5,10-methenyltetrahydrofolate + NADPH. The catalysed reaction is (6R)-5,10-methenyltetrahydrofolate + H2O = (6R)-10-formyltetrahydrofolate + H(+). It participates in one-carbon metabolism; tetrahydrofolate interconversion. Functionally, catalyzes the oxidation of 5,10-methylenetetrahydrofolate to 5,10-methenyltetrahydrofolate and then the hydrolysis of 5,10-methenyltetrahydrofolate to 10-formyltetrahydrofolate. The sequence is that of Bifunctional protein FolD from Azobacteroides pseudotrichonymphae genomovar. CFP2.